The following is a 233-amino-acid chain: Outer membrane protein MIP (233 aa).

An N-terminal signal peptide occupies residues Met1–Ala20. Residues Ser144–Ala233 enclose the PPIase FKBP-type domain.

It belongs to the FKBP-type PPIase family.

Its subcellular location is the cell outer membrane. It carries out the reaction [protein]-peptidylproline (omega=180) = [protein]-peptidylproline (omega=0). Strongly inhibited by FK506 but is completely resistant to cyclosporin A. In terms of biological role, essential virulence factor associated with macrophage infectivity. Exhibits PPIase activity. This is Outer membrane protein MIP (mip) from Legionella longbeachae.